We begin with the raw amino-acid sequence, 199 residues long: MARCKS-related protein (199 aa).

The interval 1-199 (MGSQSSKAPR…GPASASAENE (199 aa)) is disordered. A lipid anchor (N-myristoyl glycine) is attached at G2. T14 is subject to Phosphothreonine. A compositionally biased stretch (low complexity) spans 16-26 (EEAAGASPAKA). 3 positions are modified to phosphoserine: S22, S36, and S48. Over residues 53 to 64 (GADEAAGATGDA) the composition is skewed to low complexity. Phosphoserine is present on S71. Residues 74–85 (AEAKGEVAPKET) show a composition bias toward basic and acidic residues. T85 is modified (phosphothreonine). A compositionally biased stretch (basic residues) spans 86–98 (PKKKKKFSFKKPF). The tract at residues 87 to 110 (KKKKKFSFKKPFKLSGLSFKRNRK) is effector domain involved in lipid-binding and calmodulin-binding. A phosphoserine; by PKC mark is found at S93, S101, and S104. S119 is subject to Phosphoserine. S120 carries the post-translational modification Phosphoserine; by MAPK8. Phosphoserine is present on residues S132 and S135. T148 is modified (phosphothreonine; by MAPK8). S151, S162, and S165 each carry phosphoserine. A compositionally biased stretch (low complexity) spans 175–199 (GPQAAEPSTPSGPESGPASASAENE). T183 carries the phosphothreonine; by MAPK8 modification.

Belongs to the MARCKS family. As to quaternary structure, binds to filamentous actin (F-actin), but not to monomeric G-actin, independently of its phosphorylation status. Interacts with calmodulin. Post-translationally, phosphorylated. Phosphorylation at Ser-120 and Thr-183 is non-redundantly catalyzed by MAPK8 in vivo. Phosphorylation at Thr-148 is preferentially catalyzed by MAPK8 in vivo, but this modification can also be catalyzed by other kinases in the absence of MAPK8. May be phosphorylated by protein kinase C, which disrupts the interaction with calmodulin.

The protein localises to the cytoplasm. It localises to the cytoskeleton. Its subcellular location is the cell membrane. Functionally, controls cell movement by regulating actin cytoskeleton homeostasis and filopodium and lamellipodium formation. When unphosphorylated, induces cell migration. When phosphorylated by MAPK8, induces actin bundles formation and stabilization, thereby reducing actin plasticity, hence restricting cell movement, including neuronal migration. May be involved in coupling the protein kinase C and calmodulin signal transduction systems. This chain is MARCKS-related protein (Marcksl1), found in Rattus norvegicus (Rat).